The sequence spans 340 residues: Ketol-acid reductoisomerase (NADP(+)) (340 aa).

The KARI N-terminal Rossmann domain maps to 2 to 182 (AELYYDNQAD…GCTRAGVLRT (181 aa)). NADP(+)-binding positions include 25 to 28 (FGSQ), serine 51, serine 53, and 83 to 86 (DIGQ). The active site involves histidine 108. Glycine 134 contributes to the NADP(+) binding site. The region spanning 183 to 328 (TFAEETETDL…RELRRMMPFV (146 aa)) is the KARI C-terminal knotted domain. The Mg(2+) site is built by aspartate 191, glutamate 195, glutamate 227, and glutamate 231. Serine 252 is a binding site for substrate.

It belongs to the ketol-acid reductoisomerase family. Mg(2+) is required as a cofactor.

The enzyme catalyses (2R)-2,3-dihydroxy-3-methylbutanoate + NADP(+) = (2S)-2-acetolactate + NADPH + H(+). It carries out the reaction (2R,3R)-2,3-dihydroxy-3-methylpentanoate + NADP(+) = (S)-2-ethyl-2-hydroxy-3-oxobutanoate + NADPH + H(+). It participates in amino-acid biosynthesis; L-isoleucine biosynthesis; L-isoleucine from 2-oxobutanoate: step 2/4. The protein operates within amino-acid biosynthesis; L-valine biosynthesis; L-valine from pyruvate: step 2/4. Its function is as follows. Involved in the biosynthesis of branched-chain amino acids (BCAA). Catalyzes an alkyl-migration followed by a ketol-acid reduction of (S)-2-acetolactate (S2AL) to yield (R)-2,3-dihydroxy-isovalerate. In the isomerase reaction, S2AL is rearranged via a Mg-dependent methyl migration to produce 3-hydroxy-3-methyl-2-ketobutyrate (HMKB). In the reductase reaction, this 2-ketoacid undergoes a metal-dependent reduction by NADPH to yield (R)-2,3-dihydroxy-isovalerate. The protein is Ketol-acid reductoisomerase (NADP(+)) of Chloroflexus aggregans (strain MD-66 / DSM 9485).